We begin with the raw amino-acid sequence, 382 residues long: Gap junction alpha-1 protein (382 aa).

The Cytoplasmic segment spans residues 2–23 (GDWSALGKLLDKVQAYSTAGGK). S5 bears the Phosphoserine mark. Residues 24–44 (VWLSVLFIFRILLLGTAVESA) form a helical membrane-spanning segment. Residues 45–76 (WGDEQSAFRCNTQQPGCENVCYDKSFPISHVR) lie on the Extracellular side of the membrane. Intrachain disulfides connect C54/C192 and C187/C198. A helical membrane pass occupies residues 77-97 (FWVLQIIFVSVPTLLYLAHVF). The Cytoplasmic portion of the chain corresponds to 98–155 (YVMRKEEKLNKKEEELKVAQTDGVNVDMHLKQIEIKKFKYGIEEHGKVKMRGGLLRTY). K144 is covalently cross-linked (Glycyl lysine isopeptide (Lys-Gly) (interchain with G-Cter in SUMO)). Residues 156-176 (IISILFKSIFEVAFLLIQWYI) form a helical membrane-spanning segment. At 177–207 (YGFSLSAVYTCKRDPCPHQVDCFLSRPTEKT) the chain is on the extracellular side. Residues 208 to 228 (IFIIFMLVVSLVSLALNIIEL) form a helical membrane-spanning segment. Over 229 to 382 (FYVFFKGVKD…SRPRPDDLEI (154 aa)) the chain is Cytoplasmic. Residue K237 forms a Glycyl lysine isopeptide (Lys-Gly) (interchain with G-Cter in SUMO) linkage. The interval 244 to 382 (SDPYHATSGA…SRPRPDDLEI (139 aa)) is interaction with NOV. A Phosphotyrosine modification is found at Y247. Phosphoserine occurs at positions 255 and 262. The tract at residues 264-382 (KYAYFNGCSS…SRPRPDDLEI (119 aa)) is interaction with UBQLN4. C271 carries the post-translational modification S-nitrosocysteine. The residue at position 275 (T275) is a Phosphothreonine. S306 and S314 each carry phosphoserine. The segment covering 317–332 (QNRMGQAGSTISNSHA) has biased composition (polar residues). The interval 317-382 (QNRMGQAGST…SRPRPDDLEI (66 aa)) is disordered. Position 325 is a phosphoserine; by CK1 (S325). The residue at position 326 (T326) is a Phosphothreonine. A phosphoserine; by CK1 mark is found at S328 and S330. A phosphoserine mark is found at S344 and S365. Positions 362–374 (RPSSRASSRASSR) are enriched in low complexity. At S368 the chain carries Phosphoserine; by PKC/PRKCG and PKC/PRKCD. 2 positions are modified to phosphoserine: S369 and S373.

Belongs to the connexin family. Alpha-type (group II) subfamily. A connexon is composed of a hexamer of connexins. Interacts (via C-terminus) with TJP1. Interacts (via C-terminus) with SRC (via SH3 domain). Interacts (not ubiquitinated) with UBQLN4 (via UBA domain). Interacts with SGSM3 and CNST. Interacts with RIC1/CIP150. Interacts with CSNK1D. Interacts with NOV. Interacts with TMEM65. Interacts with ANK3/ANKG and PKP2. Phosphorylated at Ser-368 by PRKCG; phosphorylation induces disassembly of gap junction plaques and inhibition of gap junction activity. Phosphorylation at Ser-325, Ser-328 and Ser-330 by CK1 modulates gap junction assembly. Phosphorylation at Ser-368 by PRKCD triggers its internalization into small vesicles leading to proteasome-mediated degradation. Post-translationally, sumoylated with SUMO1, SUMO2 and SUMO3, which may regulate the level of functional Cx43 gap junctions at the plasma membrane. May be desumoylated by SENP1 or SENP2. In terms of processing, S-nitrosylation at Cys-271 is enriched at the muscle endothelial gap junction in arteries, it augments channel permeability and may regulate of smooth muscle cell to endothelial cell communication. Acetylated in the developing cortex; leading to delocalization from the cell membrane. Expressed at intercalated disks in the heart (at protein level). Expressed in the fetal cochlea.

Its subcellular location is the cell membrane. The protein resides in the cell junction. It is found in the gap junction. It localises to the endoplasmic reticulum. In terms of biological role, gap junction protein that acts as a regulator of bladder capacity. A gap junction consists of a cluster of closely packed pairs of transmembrane channels, the connexons, through which materials of low MW diffuse from one cell to a neighboring cell. May play a critical role in the physiology of hearing by participating in the recycling of potassium to the cochlear endolymph. Negative regulator of bladder functional capacity: acts by enhancing intercellular electrical and chemical transmission, thus sensitizing bladder muscles to cholinergic neural stimuli and causing them to contract. May play a role in cell growth inhibition through the regulation of NOV expression and localization. Plays an essential role in gap junction communication in the ventricles. The sequence is that of Gap junction alpha-1 protein (GJA1) from Homo sapiens (Human).